A 261-amino-acid polypeptide reads, in one-letter code: RING finger and CHY zinc finger domain-containing protein 1 (261 aa).

Residues 13 to 80 (LAQGPRGCEH…AQQTCEDCST (68 aa)) form a CHY-type zinc finger. Zn(2+) contacts are provided by C20, H22, C33, C34, C40, C43, H44, H50, C62, C65, C75, C78, C87, C90, H101, C102, C105, C108, H118, C119, C122, C125, H134, and C136. Residues 82–144 (FGEYYCSICH…KCIENVSRQN (63 aa)) form a CTCHY-type zinc finger. Residues 145–189 (CPICLEDIHTSRVVAHVLPCGHLLHRTCYEEMLKEGYRCPLCMHS) form an RING-type zinc finger.

In terms of assembly, monomer and homodimer. Interacts with AR, MDM2, KAT5, PLAG1, PLAGL2, COPE, UBE2D2 and GORAB/NTKLBP1. Subject to ubiquitination and proteasomal degradation. Interaction with PLAGL2 or KAT5 enhances protein stability. Detected in testis, liver, kidney and heart.

It localises to the nucleus. Its subcellular location is the nucleus speckle. The protein localises to the cytoplasm. It catalyses the reaction S-ubiquitinyl-[E2 ubiquitin-conjugating enzyme]-L-cysteine + [acceptor protein]-L-lysine = [E2 ubiquitin-conjugating enzyme]-L-cysteine + N(6)-ubiquitinyl-[acceptor protein]-L-lysine.. Its pathway is protein modification; protein ubiquitination. In terms of biological role, E3 ubiquitin-protein ligase that mediates ubiquitination of target proteins, including p53/TP53, TP73, HDAC1 and CDKN1B. Mediates ubiquitination and degradation of p53/TP53; preferentially acts on tetrameric p53/TP53. Catalyzes monoubiquitinates the translesion DNA polymerase POLH. Involved in the ribosome-associated quality control (RQC) pathway, which mediates the extraction of incompletely synthesized nascent chains from stalled ribosomes: RCHY1 acts downstream of NEMF and recognizes CAT tails associated with stalled nascent chains, leading to their ubiquitination and degradation. This chain is RING finger and CHY zinc finger domain-containing protein 1 (Rchy1), found in Mus musculus (Mouse).